Reading from the N-terminus, the 526-residue chain is mRNA export factor ICP27 homolog (526 aa).

Residues C239, H344, C346, and C351 each contribute to the Zn(2+) site. The CHC2-type zinc finger occupies 239 to 351 (CVFNDNGHGD…NNHQCDDIGC (113 aa)).

The protein belongs to the HHV-1 ICP27 protein family.

The protein localises to the virion tegument. Its subcellular location is the virion. It localises to the host nucleus. The protein resides in the host cytoplasm. In terms of biological role, immediate early (EI) protein that plays many roles during productive infection including regulation of viral gene expression and nuclear export of intronless viral RNAs. This chain is mRNA export factor ICP27 homolog, found in Human herpesvirus 7 (strain JI) (HHV-7).